The primary structure comprises 184 residues: GTP-binding protein Rheb (184 aa).

A Glycyl lysine isopeptide (Lys-Gly) (interchain with G-Cter in ubiquitin) cross-link involves residue Lys8. Positions 16 and 17 each coordinate GDP. Residue Ser16 participates in GTP binding. GTP is bound by residues Gly18, Lys19, Ser20, Ser21, Val32, Tyr35, Thr38, Asn119, and Asp122. Positions 19, 20, and 21 each coordinate GDP. Ser20 contributes to the Mg(2+) binding site. Positions 35–43 match the Effector region motif; sequence YDPTIENTF. Residue Thr38 coordinates GDP. Thr38 lines the Mg(2+) pocket. Asp122 serves as a coordination point for GDP. The residue at position 130 (Ser130) is a Phosphoserine; by MAPKAPK5. Ala150 provides a ligand contact to GDP. Ala150 contributes to the GTP binding site. Position 181 is a cysteine methyl ester (Cys181). Cys181 is lipidated: S-farnesyl cysteine. A propeptide spans 182–184 (removed in mature form); the sequence is SVM.

Belongs to the small GTPase superfamily. Rheb family. Associates with the mTORC1 complex (MTOR, MLST8 and RPTOR) in a guanyl nucleotide-independent manner. Interacts with TSC2. Interacts with MCRS1; the interaction maintains RHEB at the lysosome in its active GTP-bound form and prevents its interaction with the mTORC1 complex inhibitor TSC2, ensuring activation of the mTORC1 complex by RHEB. Interacts (when prenylated) with PDE6D; this promotes release from membranes. Post-translationally, farnesylation is important for efficiently activating mTORC1-mediated signaling. Polyubiquitinated in response to amino acid, promoting its interaction with MTOR and mTORC1 activation. Deubiquitination by ATXN3 promotes recruitment of the TSC-TBC complex and RHEB inactivation by TSC2. Monoubiquitinated at Lys-8 by RNF152, promoting its association with the TSC-TBC complex. Deubiquitinated at Lys-8 by USP4, promoting mTORC1 activation. In terms of processing, phosphorylation by MAPKAPK5 impairs GTP-binding and inactivation. Expressed at high levels in normal adult cortex as well as a number of peripheral tissues, including lung and intestine.

It is found in the endomembrane system. The protein resides in the lysosome membrane. It localises to the golgi apparatus membrane. The protein localises to the endoplasmic reticulum membrane. Its subcellular location is the cytoplasm. It is found in the cytosol. The catalysed reaction is GTP + H2O = GDP + phosphate + H(+). Its activity is regulated as follows. Alternates between an inactive form bound to GDP and an active form bound to GTP. Inactivated by the TSC-TBC complex via the GTPase activating protein (GAP) domain of TSC2. Autoinhibited by Tyr-35, which constrains the active site conformation, restricting the access of the catalytic Asp-65 to the nucleotide-binding pocket. Its function is as follows. Small GTPase that acts as an allosteric activator of the canonical mTORC1 complex, an evolutionarily conserved central nutrient sensor that stimulates anabolic reactions and macromolecule biosynthesis to promote cellular biomass generation and growth. In response to nutrients, growth factors or amino acids, specifically activates the protein kinase activity of MTOR, the catalytic component of the mTORC1 complex: acts by causing a conformational change that allows the alignment of residues in the active site of MTOR, thereby enhancing the phosphorylation of ribosomal protein S6 kinase (RPS6KB1 and RPS6KB2) and EIF4EBP1 (4E-BP1). RHEB is also required for localization of the TSC-TBC complex to lysosomal membranes. In response to starvation, RHEB is inactivated by the TSC-TBC complex, preventing activation of mTORC1. Has low intrinsic GTPase activity. This Rattus norvegicus (Rat) protein is GTP-binding protein Rheb.